The primary structure comprises 140 residues: ATP synthase epsilon chain 1 (140 aa).

The protein belongs to the ATPase epsilon chain family. In terms of assembly, F-type ATPases have 2 components, CF(1) - the catalytic core - and CF(0) - the membrane proton channel. CF(1) has five subunits: alpha(3), beta(3), gamma(1), delta(1), epsilon(1). CF(0) has three main subunits: a, b and c.

The protein localises to the cell inner membrane. In terms of biological role, produces ATP from ADP in the presence of a proton gradient across the membrane. The polypeptide is ATP synthase epsilon chain 1 (Methylococcus capsulatus (strain ATCC 33009 / NCIMB 11132 / Bath)).